We begin with the raw amino-acid sequence, 461 residues long: Acetylornithine aminotransferase, mitochondrial (461 aa).

The disordered stretch occupies residues tyrosine 36–methionine 56. An N6-(pyridoxal phosphate)lysine modification is found at lysine 312.

This sequence belongs to the class-III pyridoxal-phosphate-dependent aminotransferase family. The cofactor is pyridoxal 5'-phosphate.

Its subcellular location is the mitochondrion matrix. The catalysed reaction is N(2)-acetyl-L-ornithine + 2-oxoglutarate = N-acetyl-L-glutamate 5-semialdehyde + L-glutamate. It functions in the pathway amino-acid biosynthesis; L-arginine biosynthesis; N(2)-acetyl-L-ornithine from L-glutamate: step 4/4. The protein is Acetylornithine aminotransferase, mitochondrial (arg-8) of Neurospora crassa (strain ATCC 24698 / 74-OR23-1A / CBS 708.71 / DSM 1257 / FGSC 987).